Consider the following 106-residue polypeptide: Large ribosomal subunit protein uL24 (106 aa).

The protein belongs to the universal ribosomal protein uL24 family. In terms of assembly, part of the 50S ribosomal subunit.

One of two assembly initiator proteins, it binds directly to the 5'-end of the 23S rRNA, where it nucleates assembly of the 50S subunit. Functionally, one of the proteins that surrounds the polypeptide exit tunnel on the outside of the subunit. This Blochmanniella floridana protein is Large ribosomal subunit protein uL24.